Consider the following 154-residue polypeptide: MKLLVLCIFAMMATLAMSRSWHYVEPKFLNKAFEVALKVQIIAGFDRGLVKWLRVHGRTLSTVQKKALYFVNRRYMQTHWANYMLWINKKIDALGRTPVVGDYTRLGAEIGRRIDMAYFYDFLKDKNMIPKYLPYMEEINRMRPADVPVKYMGK.

The N-terminal stretch at 1–18 (MKLLVLCIFAMMATLAMS) is a signal peptide.

Monomer. Homodimer. Molecules associate into dimers and then rapidly dissociate again. Interacts (as a monomer) with the egg vitelline layer protein VERL (via VERL repeats); each VERL chain can bind multiple copies of lysin. In terms of tissue distribution, sperm (at protein level).

Its subcellular location is the cytoplasmic vesicle. It localises to the secretory vesicle. The protein localises to the acrosome lumen. Creates a 3 um hole in the egg vitelline layer through which the sperm passes. Does not have enzyme activity. Species-specific interaction between the sperm protein lysin and the egg protein VERL exposes a basic surface on lysin that may dissociate the egg vitelline layer via electrostatic repulsion. Plays a role in ensuring species-specific fertilization. The chain is Egg-lysin from Haliotis rufescens (California red abalone).